We begin with the raw amino-acid sequence, 644 residues long: MNPNNRSEHDTIKTTENNEVPTNHVQYPLAETPNPTLEDLNYKEFLRMTADNNTEALDSSTTKDVIQKGISVVGDLLGVVGFPFGGALVSFYTNFLNTIWPSEDPWKAFMEQVEALMDQKIADYAKNKALAELQGLQNNVEDYVSALSSWQKNPVSSRNPHSQGRIRELFSQAESHFRNSMPSFAISGYEVLFLTTYAQAANTHLFLLKDAQIYGEEWGYEKEDIAEFYKRQLKLTQEYTDHCVKWYNVGLDKLRGSSYESWVNFNRYRREMTLTVLDLIALFPLYDVRLYPKEVKTELTRDVLTDPIVGVNNLRGYGTTFSNIENYIRKPHLFDYLHRIQFHTRFQPGYYGNDSFNYWSGNYVSTRPSIGSNDIITSPFYGNKSSEPVQNLEFNGEKVYRAVANTNLAVWPSAVYSGVTKVEFSQYNDQTDEASTQTYDSKRNVGAVSWDSIDQLPPETTDEPLEKGYSHQLNYVMCFLMQGSRGTIPVLTWTHKSVDFFNMIDSKKITQLPLVKAYKLQSGASVVAGPRFTGGDIIQCTENGSAATIYVTPDVSYSQKYRARIHYASTSQITFTLSLDGAPFNQYYFDKTINKGDTLTYNSFNLASFSTPFELSGNNLQIGVTGLSAGDKVYIDKIEFIPVN.

Residues 1–13 (MNPNNRSEHDTIK) are compositionally biased toward basic and acidic residues. The tract at residues 1-20 (MNPNNRSEHDTIKTTENNEV) is disordered. Residues 1–57 (MNPNNRSEHDTIKTTENNEVPTNHVQYPLAETPNPTLEDLNYKEFLRMTADNNTEAL) constitute a propeptide, removed in mature form.

The protein belongs to the delta endotoxin family.

Promotes colloidosmotic lysis by binding to the midgut epithelial cells of Coleoptera. The chain is Pesticidal crystal protein Cry3Aa (cry3Aa) from Bacillus thuringiensis subsp. san diego.